Reading from the N-terminus, the 446-residue chain is Nuclear envelope integral membrane protein 1 (446 aa).

Residues 1-37 (MAGFMKYKSVSTTIETVRLKLILTAVLFLFPFSQTSG) form the signal peptide. N-linked (GlcNAc...) asparagine glycosylation is found at asparagine 62, asparagine 118, and asparagine 129. A run of 5 helical transmembrane segments spans residues 154–174 (IYLF…DVLS), 181–201 (YSAG…FIVY), 209–229 (PFYM…QLVF), 239–259 (HWHL…AVCY), and 269–289 (SINI…YAGI). Over residues 410–431 (LFSTDEEDKEEEEDGWETEDDI) the composition is skewed to acidic residues. A disordered region spans residues 410–446 (LFSTDEEDKEEEEDGWETEDDIKPEVTSPRMNNTRGK). N-linked (GlcNAc...) asparagine glycosylation occurs at asparagine 441.

Belongs to the NEMP family.

It localises to the nucleus inner membrane. Contributes to nuclear envelope stiffness in germ cells. Involved in male and female fertility. Essential for normal erythropoiesis. Required for efficient nuclear envelope opening and enucleation during the late stages of erythroblast maturation. This is Nuclear envelope integral membrane protein 1 from Danio rerio (Zebrafish).